Consider the following 135-residue polypeptide: Large ribosomal subunit protein uL16c (135 aa).

Belongs to the universal ribosomal protein uL16 family. In terms of assembly, part of the 50S ribosomal subunit.

The protein resides in the plastid. It is found in the chloroplast. The chain is Large ribosomal subunit protein uL16c from Vitis vinifera (Grape).